The primary structure comprises 807 residues: Dynein axonemal intermediate chain 4 (807 aa).

Polar residues-rich tracts occupy residues 1–11 (MHSSPTSTRKQ) and 22–31 (PRKSISFINP). 2 disordered regions span residues 1 to 44 (MHSS…AASN) and 300 to 320 (YSSK…DSES). The segment covering 32–43 (SKSSAGKGYAAS) has biased composition (low complexity). Residues 308–317 (AKDRDPKIQD) show a composition bias toward basic and acidic residues. WD repeat units follow at residues 493–533 (QSSY…NIPV), 542–590 (KHLG…DCHD), 617–657 (SRQA…QYLE), 661–701 (GHKG…PFLS), 704–743 (PTTY…LDPL), and 749–788 (NPGI…TASD).

As to quaternary structure, part of the multisubunit axonemal dynein complex formed at least of two heavy chains and a number of intermediate and light chains. Associated with axonemal dynein subunits such as, DNAH2, DNAI3, and DYNLT1. Interacts with DYNLT1. Highly expressed in tissues containing motile cilia, including the trachea, lung, oviduct, and testis.

The protein localises to the cytoplasm. Its subcellular location is the cytoskeleton. The protein resides in the flagellum axoneme. It localises to the cilium axoneme. It is found in the dynein axonemal particle. Its function is as follows. Plays a critical role in the assembly of axonemal dynein complex, thereby playing a role in ciliary motility. The chain is Dynein axonemal intermediate chain 4 (Dnai4) from Mus musculus (Mouse).